We begin with the raw amino-acid sequence, 617 residues long: Protein fem-1 homolog C (617 aa).

Methionine 1 bears the N-acetylmethionine mark. 7 ANK repeats span residues 2–31, 40–70, 82–111, 115–144, 148–177, 181–210, and 213–242; these read DLKT…KEEV, NGAT…SIEV, EGAP…SVNN, TNST…DLEV, HGHT…DVNR, KGNT…KMEK, and YGMT…TSKT. TPR repeat units follow at residues 245 to 279 and 338 to 371; these read INAL…RYSD and SYYI…QQNN. 2 ANK repeats span residues 481 to 523 and 527 to 556; these read NNFS…DVNV and DDNS…HFDA.

This sequence belongs to the fem-1 family. As to quaternary structure, component of a CRL2 E3 ubiquitin-protein ligase complex, also named ECS (Elongin BC-CUL2/5-SOCS-box protein) complex, composed of CUL2, Elongin BC (ELOB and ELOC), RBX1 and substrate-specific adapter FEM1C.

Its pathway is protein modification; protein ubiquitination. Substrate-recognition component of a Cul2-RING (CRL2) E3 ubiquitin-protein ligase complex of the DesCEND (destruction via C-end degrons) pathway, which recognizes a C-degron located at the extreme C terminus of target proteins, leading to their ubiquitination and degradation. The C-degron recognized by the DesCEND pathway is usually a motif of less than ten residues and can be present in full-length proteins, truncated proteins or proteolytically cleaved forms. The CRL2(FEM1C) complex specifically recognizes proteins with an arginine at the C-terminus: recognizes and binds proteins ending with -Lys/Arg-Xaa-Arg and -Lys/Arg-Xaa-Xaa-Arg C-degrons, such as SIL1 or OR51B2, leading to their ubiquitination and degradation. The CRL2(FEM1C) complex mediates ubiquitination and degradation of truncated MSRB1/SEPX1 selenoproteins produced by failed UGA/Sec decoding. The polypeptide is Protein fem-1 homolog C (Bos taurus (Bovine)).